Reading from the N-terminus, the 304-residue chain is Aspartate carbamoyltransferase catalytic subunit (304 aa).

Residues arginine 56 and threonine 57 each contribute to the carbamoyl phosphate site. Residue lysine 85 coordinates L-aspartate. Residues arginine 106, histidine 134, and glutamine 137 each contribute to the carbamoyl phosphate site. Positions 167 and 226 each coordinate L-aspartate. The carbamoyl phosphate site is built by leucine 265 and proline 266.

This sequence belongs to the aspartate/ornithine carbamoyltransferase superfamily. ATCase family. Heterooligomer of catalytic and regulatory chains.

It catalyses the reaction carbamoyl phosphate + L-aspartate = N-carbamoyl-L-aspartate + phosphate + H(+). Its pathway is pyrimidine metabolism; UMP biosynthesis via de novo pathway; (S)-dihydroorotate from bicarbonate: step 2/3. Catalyzes the condensation of carbamoyl phosphate and aspartate to form carbamoyl aspartate and inorganic phosphate, the committed step in the de novo pyrimidine nucleotide biosynthesis pathway. The polypeptide is Aspartate carbamoyltransferase catalytic subunit (Picrophilus torridus (strain ATCC 700027 / DSM 9790 / JCM 10055 / NBRC 100828 / KAW 2/3)).